A 71-amino-acid polypeptide reads, in one-letter code: Small ribosomal subunit protein bS21 (71 aa).

This sequence belongs to the bacterial ribosomal protein bS21 family.

In Dichelobacter nodosus (strain VCS1703A), this protein is Small ribosomal subunit protein bS21.